The following is a 500-amino-acid chain: Aspartyl/glutamyl-tRNA(Asn/Gln) amidotransferase subunit B (500 aa).

It belongs to the GatB/GatE family. GatB subfamily. As to quaternary structure, heterotrimer of A, B and C subunits.

It carries out the reaction L-glutamyl-tRNA(Gln) + L-glutamine + ATP + H2O = L-glutaminyl-tRNA(Gln) + L-glutamate + ADP + phosphate + H(+). The catalysed reaction is L-aspartyl-tRNA(Asn) + L-glutamine + ATP + H2O = L-asparaginyl-tRNA(Asn) + L-glutamate + ADP + phosphate + 2 H(+). Allows the formation of correctly charged Asn-tRNA(Asn) or Gln-tRNA(Gln) through the transamidation of misacylated Asp-tRNA(Asn) or Glu-tRNA(Gln) in organisms which lack either or both of asparaginyl-tRNA or glutaminyl-tRNA synthetases. The reaction takes place in the presence of glutamine and ATP through an activated phospho-Asp-tRNA(Asn) or phospho-Glu-tRNA(Gln). The sequence is that of Aspartyl/glutamyl-tRNA(Asn/Gln) amidotransferase subunit B from Rhizobium leguminosarum bv. trifolii (strain WSM2304).